A 757-amino-acid polypeptide reads, in one-letter code: Myb-related protein A (757 aa).

HTH myb-type domains are found at residues 30 to 81, 82 to 137, and 138 to 188; these read KKIC…QKVL, NPEL…NPEV, and KKSS…RRKV. 3 consecutive DNA-binding regions (H-T-H motif) follow at residues 58–81, 110–133, and 161–184; these read WAFI…QKVL, WSLI…HNHL, and WAEI…NSTM. The interval 187 to 209 is disordered; it reads KVEQEGYLQDGTKSSSERTGSST. Polar residues predominate over residues 197–209; that stretch reads GTKSSSERTGSST. The segment at 235-300 is transcriptional activation domain; sequence IPVYQYASPE…RLSSQAGSLP (66 aa). A negative regulatory domain region spans residues 303–558; that stretch reads SGSFVMEDCV…IRRSLLGSTP (256 aa).

In terms of assembly, component of the DREAM complex. In terms of tissue distribution, expressed ubiquitously.

It is found in the nucleus. Its function is as follows. Strong transcriptional activator; DNA-binding protein that specifically recognize the sequence 5'-YAAC[GT]G-3'. Could have a role in the proliferation and/or differentiation of neurogenic, spermatogenic and B-lymphoid cells. The protein is Myb-related protein A (MYBL1) of Gallus gallus (Chicken).